Reading from the N-terminus, the 207-residue chain is Large ribosomal subunit protein bL25 (207 aa).

It belongs to the bacterial ribosomal protein bL25 family. CTC subfamily. In terms of assembly, part of the 50S ribosomal subunit; part of the 5S rRNA/L5/L18/L25 subcomplex. Contacts the 5S rRNA. Binds to the 5S rRNA independently of L5 and L18.

This is one of the proteins that binds to the 5S RNA in the ribosome where it forms part of the central protuberance. In Brucella abortus (strain S19), this protein is Large ribosomal subunit protein bL25.